Consider the following 398-residue polypeptide: Aldo-keto reductase ausK (398 aa).

Residue Asp76 participates in NADP(+) binding. Tyr81 (proton donor) is an active-site residue. A substrate-binding site is contributed by His156. NADP(+) contacts are provided by residues 186–187 (CN), Gln212, 241–251 (DALGSGKFQSR), and 317–325 (RKIQHLHDN).

It belongs to the aldo/keto reductase family. Aldo/keto reductase 2 subfamily. In terms of assembly, homodimer.

It participates in secondary metabolite biosynthesis; terpenoid biosynthesis. Its function is as follows. Aldo-keto reductase; part of the gene cluster B that mediates the biosynthesis of austinol and dehydroaustinol, two fungal meroterpenoids. The first step of the pathway is the synthesis of 3,5-dimethylorsellinic acid by the polyketide synthase ausA. 3,5-dimethylorsellinic acid is then prenylated by the polyprenyl transferase ausN. Further epoxidation by the FAD-dependent monooxygenase ausM and cyclization by the probable terpene cyclase ausL lead to the formation of protoaustinoid A. Protoaustinoid A is then oxidized to spiro-lactone preaustinoid A3 by the combined action of the FAD-binding monooxygenases ausB and ausC, and the dioxygenase ausE. Acid-catalyzed keto-rearrangement and ring contraction of the tetraketide portion of preaustinoid A3 by ausJ lead to the formation of preaustinoid A4. The aldo-keto reductase ausK, with the help of ausH, is involved in the next step by transforming preaustinoid A4 into isoaustinone which is in turn hydroxylated by the P450 monooxygenase ausI to form austinolide. Finally, the cytochrome P450 monooxygenase ausG modifies austinolide to austinol. Austinol can be further modified to dehydroaustinol which forms a diffusible complex with diorcinol that initiates conidiation. Due to genetic rearrangements of the clusters and the subsequent loss of some enzymes, the end products of the Emericella nidulans austinoid biosynthesis clusters are austinol and dehydroaustinol, even if additional enzymes, such as the O-acetyltransferase ausQ and the cytochrome P450 monooxygenase ausR are still functional. The chain is Aldo-keto reductase ausK from Emericella nidulans (strain FGSC A4 / ATCC 38163 / CBS 112.46 / NRRL 194 / M139) (Aspergillus nidulans).